Here is a 141-residue protein sequence, read N- to C-terminus: Hemoglobin subunit alpha (141 aa).

The region spanning 1–141 (VLSPADKKNV…VSTVLTSKYR (141 aa)) is the Globin domain. Ser-3 is modified (phosphoserine). Residues Lys-7 and Lys-11 each carry the N6-succinyllysine modification. Lys-16 carries the post-translational modification N6-acetyllysine; alternate. N6-succinyllysine; alternate is present on Lys-16. Tyr-24 bears the Phosphotyrosine mark. Ser-35 bears the Phosphoserine mark. At Lys-40 the chain carries N6-succinyllysine. Ser-49 carries the phosphoserine modification. His-58 lines the O2 pocket. A heme b-binding site is contributed by His-87. Phosphoserine is present on Ser-102. Residue Thr-108 is modified to Phosphothreonine. Residues Ser-124 and Ser-131 each carry the phosphoserine modification. 2 positions are modified to phosphothreonine: Thr-134 and Thr-137. Ser-138 is subject to Phosphoserine.

This sequence belongs to the globin family. As to quaternary structure, heterotetramer of two alpha chains and two beta chains. In terms of tissue distribution, red blood cells.

In terms of biological role, involved in oxygen transport from the lung to the various peripheral tissues. Functionally, hemopressin acts as an antagonist peptide of the cannabinoid receptor CNR1. Hemopressin-binding efficiently blocks cannabinoid receptor CNR1 and subsequent signaling. This chain is Hemoglobin subunit alpha (HBA), found in Spermophilus citellus (European ground squirrel).